The following is a 99-amino-acid chain: Large ribosomal subunit protein uL23 (99 aa).

It belongs to the universal ribosomal protein uL23 family. As to quaternary structure, part of the 50S ribosomal subunit. Contacts protein L29, and trigger factor when it is bound to the ribosome.

Its function is as follows. One of the early assembly proteins it binds 23S rRNA. One of the proteins that surrounds the polypeptide exit tunnel on the outside of the ribosome. Forms the main docking site for trigger factor binding to the ribosome. The chain is Large ribosomal subunit protein uL23 from Shewanella woodyi (strain ATCC 51908 / MS32).